Reading from the N-terminus, the 345-residue chain is Probable dual-specificity RNA methyltransferase RlmN (345 aa).

The active-site Proton acceptor is the Glu-90. The Radical SAM core domain occupies 96–326; the sequence is YDYGNSICIS…STIRKEMGAD (231 aa). Cys-103 and Cys-331 form a disulfide bridge. Residues Cys-110, Cys-114, and Cys-117 each coordinate [4Fe-4S] cluster. Residues 157–158, Ser-189, 212–214, and Asn-288 each bind S-adenosyl-L-methionine; these read GE and SLH. Cys-331 functions as the S-methylcysteine intermediate in the catalytic mechanism.

Belongs to the radical SAM superfamily. RlmN family. [4Fe-4S] cluster serves as cofactor.

The protein localises to the cytoplasm. The enzyme catalyses adenosine(2503) in 23S rRNA + 2 reduced [2Fe-2S]-[ferredoxin] + 2 S-adenosyl-L-methionine = 2-methyladenosine(2503) in 23S rRNA + 5'-deoxyadenosine + L-methionine + 2 oxidized [2Fe-2S]-[ferredoxin] + S-adenosyl-L-homocysteine. It catalyses the reaction adenosine(37) in tRNA + 2 reduced [2Fe-2S]-[ferredoxin] + 2 S-adenosyl-L-methionine = 2-methyladenosine(37) in tRNA + 5'-deoxyadenosine + L-methionine + 2 oxidized [2Fe-2S]-[ferredoxin] + S-adenosyl-L-homocysteine. Functionally, specifically methylates position 2 of adenine 2503 in 23S rRNA and position 2 of adenine 37 in tRNAs. In Clostridium acetobutylicum (strain ATCC 824 / DSM 792 / JCM 1419 / IAM 19013 / LMG 5710 / NBRC 13948 / NRRL B-527 / VKM B-1787 / 2291 / W), this protein is Probable dual-specificity RNA methyltransferase RlmN.